Here is a 383-residue protein sequence, read N- to C-terminus: Podocin (383 aa).

The segment covering 1–41 (MERRARSSSRESRGRGGRTPHKENKRAKAERSGGGRGRQEA) has biased composition (basic and acidic residues). The segment at 1-76 (MERRARSSSR…VDEVRGSGEE (76 aa)) is disordered. At 1–102 (MERRARSSSR…TKSSGLGACE (102 aa)) the chain is on the cytoplasmic side. Cys-101 is lipidated: S-palmitoyl cysteine. Residues 103–123 (WLLVLISLLFIIMTFPFSIWF) lie within the membrane without spanning it. The Cytoplasmic portion of the chain corresponds to 124 to 383 (CVKVVQEYER…NPKKKDSPML (260 aa)). Residue Gln-287 is glycosylated (N-linked (GlcNAc...) asparagine). Positions 355-383 (NRTQGSLPFPSPSKPVEPLNPKKKDSPML) are disordered. The segment covering 374–383 (NPKKKDSPML) has biased composition (basic and acidic residues).

It belongs to the band 7/mec-2 family. Interacts with nephrin/NPHS1 and KIRREL1. Interacts directly with CD2AP. Interacts with DDN. Glycosylated. As to expression, almost exclusively expressed in the podocytes of fetal and mature kidney glomeruli.

The protein localises to the cell membrane. Its subcellular location is the endoplasmic reticulum. Functionally, plays a role in the regulation of glomerular permeability, acting probably as a linker between the plasma membrane and the cytoskeleton. The protein is Podocin (NPHS2) of Homo sapiens (Human).